Reading from the N-terminus, the 28-residue chain is Dermaseptin-1 (28 aa).

Residue Q28 is modified to Glutamine amide.

In terms of tissue distribution, expressed by the skin glands.

It is found in the secreted. Its function is as follows. Has antimicrobial activity. The sequence is that of Dermaseptin-1 from Phyllomedusa tomopterna (Tiger-striped leaf frog).